Here is a 315-residue protein sequence, read N- to C-terminus: Tyrosine recombinase XerC (315 aa).

A Core-binding (CB) domain is found at 13–104; that stretch reads ADLAAAREEW…GVRSLLRHLE (92 aa). The Tyr recombinase domain occupies 125–309; that stretch reads SLPKPLTADD…DTQRLLEVYD (185 aa). Residues Arg-168, Lys-193, His-261, Arg-264, and His-287 contribute to the active site. The active-site O-(3'-phospho-DNA)-tyrosine intermediate is the Tyr-296.

The protein belongs to the 'phage' integrase family. XerC subfamily. Forms a cyclic heterotetrameric complex composed of two molecules of XerC and two molecules of XerD.

Its subcellular location is the cytoplasm. Functionally, site-specific tyrosine recombinase, which acts by catalyzing the cutting and rejoining of the recombining DNA molecules. The XerC-XerD complex is essential to convert dimers of the bacterial chromosome into monomers to permit their segregation at cell division. It also contributes to the segregational stability of plasmids. The sequence is that of Tyrosine recombinase XerC from Brucella melitensis biotype 1 (strain ATCC 23456 / CCUG 17765 / NCTC 10094 / 16M).